Here is a 132-residue protein sequence, read N- to C-terminus: Pre-histone-like nucleoprotein (132 aa).

Residues Ala2–Gly23 constitute a propeptide that is removed on maturation. Residues Arg124–Lys132 carry the Nuclear localization signal motif.

Belongs to the adenoviridae histone-like nucleoprotein family. As to quaternary structure, interacts with the core-capsid bridging protein; this interaction bridges the virus core to the capsid. Interacts with host NPM1; this interaction might play a role in placing the pre-histone-like nucleoprotein on the viral DNA or regulating viral gene expression. Interacts with host HMGB1; this interaction inhibits host immune response. In terms of processing, cleaved near the N-terminus by the viral protease during virion maturation to form the mature protein.

It is found in the virion. The protein localises to the host nucleus. The protein resides in the host nucleolus. Functionally, plays a role in the inhibition of host immune response within the nucleus. Interacts with cellular nucleosomes and immobilizes the host immune danger signal HMGB1 on chromatin. In turn, prevents HMGB1 release out of the cell and thus decreases inflammation. Also plays a role in the wrapping and condensation of the viral DNA. May also promote viral genome import into the nucleus. This is Pre-histone-like nucleoprotein from Canine adenovirus serotype 1 (strain RI261) (CAdV-1).